The primary structure comprises 752 residues: Protein WEAK CHLOROPLAST MOVEMENT UNDER BLUE LIGHT-like 2 (752 aa).

S143 is modified (phosphoserine). Coiled coils occupy residues 186–557 (ERRK…SRAS) and 596–651 (ELSK…KEAM). Residues 476 to 495 (KHDLSETRQRNREDTREEKC) form a disordered region. The span at 653–675 (KVEKARDGKVGMDHELRKWRSDN) shows a compositional bias: basic and acidic residues. The disordered stretch occupies residues 653 to 733 (KVEKARDGKV…ETETKKKKKR (81 aa)). The segment covering 690–723 (KSKSALHQPTTFTFGEQASSSNVTPQASSSNVTP) has biased composition (polar residues).

Belongs to the WEB family.

This Arabidopsis thaliana (Mouse-ear cress) protein is Protein WEAK CHLOROPLAST MOVEMENT UNDER BLUE LIGHT-like 2 (WEL2).